We begin with the raw amino-acid sequence, 152 residues long: Large ribosomal subunit protein bL9 (152 aa).

This sequence belongs to the bacterial ribosomal protein bL9 family.

Functionally, binds to the 23S rRNA. The protein is Large ribosomal subunit protein bL9 of Chlorobaculum tepidum (strain ATCC 49652 / DSM 12025 / NBRC 103806 / TLS) (Chlorobium tepidum).